The following is a 205-amino-acid chain: Holliday junction branch migration complex subunit RuvA (205 aa).

The domain I stretch occupies residues 1-64; that stretch reads MIGKLKGLID…EDQIKLFGFR (64 aa). The interval 65 to 143 is domain II; it reads SDVEREWFRL…AFADVDPGVI (79 aa). Residues 144 to 154 are flexible linker; it reads RLSGAIEDSRA. A domain III region spans residues 154–205; it reads APQPIADAISALINLGYGQPQAAAAIAAASRAAGDKAETAQLIRLGLKELAK.

Belongs to the RuvA family. As to quaternary structure, homotetramer. Forms an RuvA(8)-RuvB(12)-Holliday junction (HJ) complex. HJ DNA is sandwiched between 2 RuvA tetramers; dsDNA enters through RuvA and exits via RuvB. An RuvB hexamer assembles on each DNA strand where it exits the tetramer. Each RuvB hexamer is contacted by two RuvA subunits (via domain III) on 2 adjacent RuvB subunits; this complex drives branch migration. In the full resolvosome a probable DNA-RuvA(4)-RuvB(12)-RuvC(2) complex forms which resolves the HJ.

The protein resides in the cytoplasm. Its function is as follows. The RuvA-RuvB-RuvC complex processes Holliday junction (HJ) DNA during genetic recombination and DNA repair, while the RuvA-RuvB complex plays an important role in the rescue of blocked DNA replication forks via replication fork reversal (RFR). RuvA specifically binds to HJ cruciform DNA, conferring on it an open structure. The RuvB hexamer acts as an ATP-dependent pump, pulling dsDNA into and through the RuvAB complex. HJ branch migration allows RuvC to scan DNA until it finds its consensus sequence, where it cleaves and resolves the cruciform DNA. In Bradyrhizobium sp. (strain BTAi1 / ATCC BAA-1182), this protein is Holliday junction branch migration complex subunit RuvA.